Here is a 478-residue protein sequence, read N- to C-terminus: Cytochrome c-552 (478 aa).

The N-terminal stretch at 1–26 is a signal peptide; sequence MARKTLRARRFFSLIFPFFFITSVYA. His94 provides a ligand contact to heme c. Positions 122, 125, and 126 each coordinate heme. Residues Cys160, Cys163, His164, Cys209, Cys212, and His213 each contribute to the heme c site. Residues Glu215, Tyr216, Lys261, and Gln263 each coordinate Ca(2+). Residue Tyr216 participates in substrate binding. Residue His264 participates in substrate binding. Residues His275, Cys282, Cys285, His286, His301, Cys314, Cys317, His318, and His393 each contribute to the heme c site.

The protein belongs to the cytochrome c-552 family. Ca(2+) serves as cofactor. It depends on heme c as a cofactor.

The protein localises to the periplasm. It catalyses the reaction 6 Fe(III)-[cytochrome c] + NH4(+) + 2 H2O = 6 Fe(II)-[cytochrome c] + nitrite + 8 H(+). The protein operates within nitrogen metabolism; nitrate reduction (assimilation). Its function is as follows. Catalyzes the reduction of nitrite to ammonia, consuming six electrons in the process. This is Cytochrome c-552 from Salmonella gallinarum (strain 287/91 / NCTC 13346).